We begin with the raw amino-acid sequence, 702 residues long: Glucosidase 2 subunit beta (702 aa).

The N-terminal stretch at 1–20 (MVSMFSLFLLLIEQSPLVAS) is a signal peptide. Asn-145 is a glycosylation site (N-linked (GlcNAc...) asparagine). Residues 163–228 (SYREGKEALE…LRGEYFNQLS (66 aa)) adopt a coiled-coil conformation. Asn-240 and Asn-358 each carry an N-linked (GlcNAc...) asparagine glycan. The disordered stretch occupies residues 435–457 (PKVLPPDAVESEQDTNSDHIGTS). The stretch at 478–517 (KDLVSLEKRFRSCESQVSLLENELKQKMDYKKLLDETEDE) forms a coiled coil. Asn-520 and Asn-525 each carry an N-linked (GlcNAc...) asparagine glycan. In terms of domain architecture, MRH spans 537 to 689 (SYCLDDILDN…DVVGPLGCNK (153 aa)). Intrachain disulfides connect Cys-539-Cys-552, Cys-646-Cys-675, and Cys-660-Cys-687. N-linked (GlcNAc...) asparagine glycosylation is found at Asn-688 and Asn-699.

As to quaternary structure, heterodimer of a catalytic subunit alpha (ROT2) and a subunit beta (GTB1).

The protein resides in the endoplasmic reticulum. Its function is as follows. Subunit of glucosidase 2, which cleaves sequentially the 2 innermost alpha-1,3-linked glucose residues from the Glc(2)Man(9)GlcNAc(2) oligosaccharide precursor of immature glycoproteins. Specifically required for the cleavage of the final glucose. The chain is Glucosidase 2 subunit beta (GTB1) from Saccharomyces cerevisiae (strain ATCC 204508 / S288c) (Baker's yeast).